The primary structure comprises 489 residues: Cobyric acid synthase (489 aa).

The GATase cobBQ-type domain maps to 251-444; it reads GLIIAVIRLP…LHGIFANDTF (194 aa). Residue cysteine 329 is the Nucleophile of the active site. Residue histidine 436 is part of the active site.

This sequence belongs to the CobB/CobQ family. CobQ subfamily.

The protein operates within cofactor biosynthesis; adenosylcobalamin biosynthesis. Its function is as follows. Catalyzes amidations at positions B, D, E, and G on adenosylcobyrinic A,C-diamide. NH(2) groups are provided by glutamine, and one molecule of ATP is hydrogenolyzed for each amidation. The sequence is that of Cobyric acid synthase from Chloroflexus aurantiacus (strain ATCC 29366 / DSM 635 / J-10-fl).